Reading from the N-terminus, the 122-residue chain is Large ribosomal subunit protein uL14 (122 aa).

The protein belongs to the universal ribosomal protein uL14 family. Part of the 50S ribosomal subunit. Forms a cluster with proteins L3 and L19. In the 70S ribosome, L14 and L19 interact and together make contacts with the 16S rRNA in bridges B5 and B8.

Its function is as follows. Binds to 23S rRNA. Forms part of two intersubunit bridges in the 70S ribosome. This chain is Large ribosomal subunit protein uL14, found in Ectopseudomonas mendocina (strain ymp) (Pseudomonas mendocina).